The sequence spans 714 residues: Pre-mRNA-splicing factor CLF1 (714 aa).

12 HAT repeats span residues 48–80 (SFQLTKRKEYEQQLNKNRLNFGQWLRYAKWEVK), 83–115 (HDFPRARSIFERALEVNVQHIPFWTHYIQFELS), 117–149 (KNITHARNLLDRAVTTLPRVDKLWFLYVQTEET), 151–182 (KNYQMVRIIFERWLSWNPNPSAWDAYINYEKR), 184–215 (DEYDNAREIYIRYVQIHSSGEIWLKWIDFEMN), 265–305 (KEYE…FEKS), 315–347 (SIMIKRKLKYEEEVNKSPSDYDSWWSYISILQQ), 349–384 (DNNEVTRETFERAIKVIPTDAFKSTVWRRYIYIWVK), 394–430 (GSIENGRNIWNKALKVIPHKRFTFAKIWISFAQFEIR), 435–470 (NGLASARKILGRSIGQSSTVKPKRKLFKFYIELEQK), 472–510 (GEWDRVRKLYEKWLELSLVGENNLSTINSLLTYIDFEKN), and 555–586 (MRYAEARSLYRKLVERVSTPKVWISFALFESS).

This sequence belongs to the crooked-neck family. Associated with the spliceosome.

The protein localises to the nucleus. Its function is as follows. Involved in pre-mRNA splicing and cell cycle progression. Required for the spliceosome assembly and initiation of the DNA replication. The sequence is that of Pre-mRNA-splicing factor CLF1 (CLF1) from Debaryomyces hansenii (strain ATCC 36239 / CBS 767 / BCRC 21394 / JCM 1990 / NBRC 0083 / IGC 2968) (Yeast).